We begin with the raw amino-acid sequence, 451 residues long: Golgi reassembly-stacking protein 2 (451 aa).

Glycine 2 carries the N-myristoyl glycine lipid modification. PDZ GRASP-type domains are found at residues 15-105 (EGYH…FCSF) and 111-199 (NVWH…YGYL). The interval 15–215 (EGYHVLRVQE…PFEEGKKISL (201 aa)) is GRASP. Dimethylated arginine occurs at positions 30 and 47. Residues 194–199 (IGYGYL) form an important for membrane binding region. At serine 214 the chain carries Phosphoserine. Phosphothreonine is present on threonine 222. The residue at position 225 (threonine 225) is a Phosphothreonine; by MAPK. Positions 236–252 (LSSVSPPSLSPPGTTGV) are enriched in low complexity. Disordered stretches follow at residues 236 to 255 (LSSV…VEQS) and 377 to 451 (EGSS…SEPS). A compositionally biased stretch (polar residues) spans 410-424 (SSLTVDVTSPASKVP). The residue at position 411 (serine 411) is a Phosphoserine. Phosphothreonine is present on residues threonine 417 and threonine 435. A phosphoserine mark is found at serine 443 and serine 448.

The protein belongs to the GORASP family. As to quaternary structure, homodimer. Homooligomer. ER stress induces phosphorylation-dependent monomerization. Interacts with BLZF1/Golgin 45. Identified in a complex with RAB2 and GORASP2. Interacts with JAM2 and JAM3. Interacts with members of the p24 cargo receptors. Interacts with CNIH and the cytoplasmic domain of transmembrane TGFA, prior its transit in the trans-Golgi. Interacts with KCTD5. Interacts with TMED2 and TMED3. Interacts with SEC16A in response to ER stress. Interacts (via PDZ GRASP-type 1 domain) with core-glycosylated CFTR in response to ER stress. Post-translationally, myristoylated. Myristoylation is essential for the Golgi targeting. In terms of processing, palmitoylated. Phosphorylated in mitotic cells. ER stress-induced phosphorylation at Ser-443 induces monomerization and subsequent relocalization from Golgi to ER which is essential for mediating unconventional (ER/Golgi-independent) trafficking of CFTR to the cell membrane. As to expression, detected in lung, heart and testis. Colocalized in a polarized fashion in the acrosome region with JAM3 in round spermatids (at protein level).

The protein localises to the golgi apparatus membrane. Its subcellular location is the endoplasmic reticulum membrane. It is found in the golgi apparatus. Functionally, key structural protein of the Golgi apparatus. The membrane cisternae of the Golgi apparatus adhere to each other to form stacks, which are aligned side by side to form the Golgi ribbon. Acting in concert with GORASP1/GRASP65, is required for the formation and maintenance of the Golgi ribbon, and may be dispensable for the formation of stacks. However, other studies suggest that GORASP2 plays a role in assembly and membrane stacking of the Golgi cisternae, and in the process by which Golgi stacks reform after breakdown during mitosis and meiosis. May regulate the intracellular transport and presentation of a defined set of transmembrane proteins, such as transmembrane TGFA. Required for normal acrosome formation during spermiogenesis and normal male fertility, probably by promoting colocalization of JAM2 and JAM3 at contact sites between germ cells and Sertoli cells. Mediates ER stress-induced unconventional (ER/Golgi-independent) trafficking of core-glycosylated CFTR to cell membrane. This Mus musculus (Mouse) protein is Golgi reassembly-stacking protein 2 (Gorasp2).